A 423-amino-acid polypeptide reads, in one-letter code: Endoplasmic reticulum junction formation protein lunapark (423 aa).

The Cytoplasmic segment spans residues 1-45 (MGALLAKWRAKPSTVEVLEKMEKDIQSLEEFRDKNQKLRKIWVAR). Positions 16–40 (EVLEKMEKDIQSLEEFRDKNQKLRK) form a coiled coil. The helical transmembrane segment at 46–66 (LFFYSTILYILTSLTVYLWYL) threads the bilayer. The Lumenal segment spans residues 67-77 (PDGMTARLLTM). Residues 78–98 (LLFLSFPVLIWFVRTLLILWF) traverse the membrane as a helical segment. Residues 99-423 (SRRTERNNDA…ETEESFMETE (325 aa)) lie on the Cytoplasmic side of the membrane. Residues 101 to 128 (RTERNNDALELLKTEKKKILEEVMEKET) adopt a coiled-coil conformation. The segment at 147 to 169 (KELELPVPGPPITPRPGQDLRQR) is disordered. Thr-159 carries the phosphothreonine modification. A phosphoserine mark is found at Ser-177, Ser-179, and Ser-188. Position 198 is a phosphothreonine (Thr-198). The segment at 200 to 247 (SLQRDTSAPGGPPERSVQPTPQSNILQRRPGSPATTVSGMAIHPPGPP) is disordered. Residues Ser-206 and Ser-215 each carry the phosphoserine modification. Residues 216–225 (VQPTPQSNIL) show a composition bias toward polar residues. Thr-219 bears the Phosphothreonine mark. Ser-222 and Ser-231 each carry phosphoserine. The segment at 280–305 (CQQCFSHNGMALKEEFEYVAFRCAYC) adopts a C4-type; plays a role in ER morphology zinc-finger fold. The segment at 318–423 (APRLQEINFD…ETEESFMETE (106 aa)) is disordered. Residues 334 to 343 (DSQGSVSSVQ) are compositionally biased toward polar residues. Acidic residues-rich tracts occupy residues 370–391 (QAIEEDSTCSEQQWEEAPDDSE) and 414–423 (ETEESFMETE).

Belongs to the lunapark family. Homodimer; homodimerization requires the C4-type zinc finger motif and decreases during mitosis in a phosphorylation-dependent manner. Phosphorylated. Phosphorylation at Thr-159 occurs during interphase. Phosphorylation at Ser-177, Ser-179, Ser-188, Thr-198, Ser-206, Ser-215, Thr-219, Ser-222 and Ser-231 occurs during mitosis; these phosphorylations reduce both its homodimerization and the ER three-way tubular junction formation.

Its subcellular location is the endoplasmic reticulum membrane. In terms of biological role, endoplasmic reticulum (ER)-shaping membrane protein that plays a role in determining ER morphology. Involved in the stabilization of nascent three-way ER tubular junctions within the ER network. May also play a role as a curvature-stabilizing protein within three-way ER tubular junction network. This is Endoplasmic reticulum junction formation protein lunapark (lnpk) from Xenopus tropicalis (Western clawed frog).